A 325-amino-acid polypeptide reads, in one-letter code: Iodotyrosine dehalogenase 1 homolog (325 aa).

Residues Val42–Leu62 traverse the membrane as a helical segment. Residues Leu63–Tyr325 lie on the Cytoplasmic side of the membrane. Residues Arg135 to Arg139, Ser163 to Val164, Val273 to Ser275, and Arg315 contribute to the FMN site.

This sequence belongs to the nitroreductase family. FMN serves as cofactor. As to expression, expressed in body-wall, anal depressor and vulval muscles.

It is found in the membrane. May contribute to coordination of muscle contraction as regulatory subunit of the nonessential sup-9 potassium channel complex. May act downstream of sup-10. The protein is Iodotyrosine dehalogenase 1 homolog of Caenorhabditis elegans.